A 263-amino-acid polypeptide reads, in one-letter code: Small ribosomal subunit protein eS4 (263 aa).

The S4 RNA-binding domain maps to 42–104 (LPLIIFLRNR…TGENFRLIYD (63 aa)).

Belongs to the eukaryotic ribosomal protein eS4 family.

This is Small ribosomal subunit protein eS4 (RPS4) from Cricetulus griseus (Chinese hamster).